The sequence spans 2372 residues: NBAS subunit of NRZ tethering complex (2372 aa).

2 WD repeats span residues 119 to 158 (DPNP…LFII) and 304 to 343 (GEQD…LRGS). Positions 447–468 (LESSVKGEEDDGDDDSDSDEEA) are disordered. Residues 454 to 467 (EEDDGDDDSDSDEE) are compositionally biased toward acidic residues. Residues 629 to 668 (YEDFLSMEEELEQRKERESKKRQELLKKVDFSKLTLEQKE) adopt a coiled-coil conformation.

It is found in the endoplasmic reticulum. Its function is as follows. Involved in Golgi-to-endoplasmic reticulum (ER) retrograde transport; the function is proposed to depend on its association in the NRZ complex which is believed to play a role in SNARE assembly at the ER. Required for normal embryonic development. May play a role in the nonsense-mediated decay pathway of mRNAs containing premature stop codons. The polypeptide is NBAS subunit of NRZ tethering complex (Danio rerio (Zebrafish)).